A 124-amino-acid polypeptide reads, in one-letter code: Multifunctional methyltransferase subunit TRM112 homolog A (124 aa).

In terms of domain architecture, TRM112 spans 2–120 (RLITHNMLSC…NKGIPNMLLH (119 aa)).

This sequence belongs to the TRM112 family. As to quaternary structure, interacts with TRM9.

Functionally, acts as an activator of both rRNA/tRNA and protein methyltransferases. Required for TRM9 tRNA methyltransferase activity. Involved in the regulation of cell division progression during organ growth. Required for the expression of cell cycle-related genes, and the G2-M phase progression during organogenesis. This chain is Multifunctional methyltransferase subunit TRM112 homolog A, found in Arabidopsis thaliana (Mouse-ear cress).